The following is a 328-amino-acid chain: GTP 3',8-cyclase (328 aa).

One can recognise a Radical SAM core domain in the interval 1-229; sequence MNQVDYLRIS…DAQVRGAGPA (229 aa). GTP is bound at residue R8. Positions 15 and 19 each coordinate [4Fe-4S] cluster. Residue Y21 participates in S-adenosyl-L-methionine binding. C22 provides a ligand contact to [4Fe-4S] cluster. R60 is a GTP binding site. Residue G64 participates in S-adenosyl-L-methionine binding. T91 contacts GTP. Residue S115 participates in S-adenosyl-L-methionine binding. Residue K155 coordinates GTP. An S-adenosyl-L-methionine-binding site is contributed by M189. [4Fe-4S] cluster-binding residues include C252 and C255. Residue 257–259 participates in GTP binding; sequence RMR. C269 serves as a coordination point for [4Fe-4S] cluster.

The protein belongs to the radical SAM superfamily. MoaA family. As to quaternary structure, monomer and homodimer. [4Fe-4S] cluster is required as a cofactor.

It carries out the reaction GTP + AH2 + S-adenosyl-L-methionine = (8S)-3',8-cyclo-7,8-dihydroguanosine 5'-triphosphate + 5'-deoxyadenosine + L-methionine + A + H(+). It functions in the pathway cofactor biosynthesis; molybdopterin biosynthesis. Functionally, catalyzes the cyclization of GTP to (8S)-3',8-cyclo-7,8-dihydroguanosine 5'-triphosphate. This is GTP 3',8-cyclase from Nostoc sp. (strain PCC 7120 / SAG 25.82 / UTEX 2576).